Consider the following 425-residue polypeptide: Serine--tRNA ligase (425 aa).

228-230 (TAE) is an L-serine binding site. 259-261 (RSE) contributes to the ATP binding site. Glutamate 282 provides a ligand contact to L-serine. 346–349 (EIAS) lines the ATP pocket. Serine 382 contributes to the L-serine binding site.

Belongs to the class-II aminoacyl-tRNA synthetase family. Type-1 seryl-tRNA synthetase subfamily. Homodimer. The tRNA molecule binds across the dimer.

Its subcellular location is the cytoplasm. It carries out the reaction tRNA(Ser) + L-serine + ATP = L-seryl-tRNA(Ser) + AMP + diphosphate + H(+). The enzyme catalyses tRNA(Sec) + L-serine + ATP = L-seryl-tRNA(Sec) + AMP + diphosphate + H(+). It functions in the pathway aminoacyl-tRNA biosynthesis; selenocysteinyl-tRNA(Sec) biosynthesis; L-seryl-tRNA(Sec) from L-serine and tRNA(Sec): step 1/1. In terms of biological role, catalyzes the attachment of serine to tRNA(Ser). Is also able to aminoacylate tRNA(Sec) with serine, to form the misacylated tRNA L-seryl-tRNA(Sec), which will be further converted into selenocysteinyl-tRNA(Sec). The polypeptide is Serine--tRNA ligase (Rickettsia akari (strain Hartford)).